The primary structure comprises 508 residues: Photosystem II CP47 reaction center protein (508 aa).

Transmembrane regions (helical) follow at residues 21–36, 101–115, 140–156, 203–218, 237–252, and 457–472; these read AVHIMHTALVAGWAGS, ILFSGLCFLAAIWHW, GIHLFLSGLACFGFGAF, IAAGTLGILAGLFHLS, VLSSSIAAVFFAAFVV, and SFALLFFFGHIWHGAR.

The protein belongs to the PsbB/PsbC family. PsbB subfamily. PSII is composed of 1 copy each of membrane proteins PsbA, PsbB, PsbC, PsbD, PsbE, PsbF, PsbH, PsbI, PsbJ, PsbK, PsbL, PsbM, PsbT, PsbX, PsbY, PsbZ, Psb30/Ycf12, at least 3 peripheral proteins of the oxygen-evolving complex and a large number of cofactors. It forms dimeric complexes. Requires Binds multiple chlorophylls. PSII binds additional chlorophylls, carotenoids and specific lipids. as cofactor.

It localises to the plastid. The protein resides in the chloroplast thylakoid membrane. In terms of biological role, one of the components of the core complex of photosystem II (PSII). It binds chlorophyll and helps catalyze the primary light-induced photochemical processes of PSII. PSII is a light-driven water:plastoquinone oxidoreductase, using light energy to abstract electrons from H(2)O, generating O(2) and a proton gradient subsequently used for ATP formation. The polypeptide is Photosystem II CP47 reaction center protein (Oenothera biennis (German evening primrose)).